A 385-amino-acid polypeptide reads, in one-letter code: Methionine aminopeptidase 1 (385 aa).

Residues 6–59 (SRVCETEGCSSEAKLQCPTCIKLGIQGSYFCSQECFKGSWASHKLLHKKAKDDK) form a C6H2-type zinc finger. The Zn(2+) site is built by Cys-9, Cys-14, Cys-22, Cys-25, Cys-36, Cys-40, His-48, and His-52. His-203 contacts a protein. Positions 220, 231, and 294 each coordinate Zn(2+). His-301 serves as a coordination point for a protein. Zn(2+) contacts are provided by Glu-327 and Glu-358.

The protein belongs to the peptidase M24A family. Methionine aminopeptidase type 1 subfamily. In terms of assembly, associates with the 60S ribosomal subunit of the 80S translational complex. It depends on Zn(2+) as a cofactor. Co(2+) serves as cofactor. Requires Mn(2+) as cofactor. The cofactor is Fe(2+).

It is found in the cytoplasm. The catalysed reaction is Release of N-terminal amino acids, preferentially methionine, from peptides and arylamides.. Cotranslationally removes the N-terminal methionine from nascent proteins. The N-terminal methionine is often cleaved when the second residue in the primary sequence is small and uncharged (Met-Ala-, Cys, Gly, Pro, Ser, Thr, or Val). This Xenopus tropicalis (Western clawed frog) protein is Methionine aminopeptidase 1 (metap1).